A 454-amino-acid polypeptide reads, in one-letter code: Glycosyl hydrolase family 109 protein (454 aa).

Residues 1 to 29 (MFAMKRREFIAASAAVAASSLLPQTPAWA) constitute a signal peptide (tat-type signal). NAD(+)-binding positions include 43 to 44 (MR), Asp-65, 116 to 119 (WEYH), 136 to 137 (EV), and Asn-165. Substrate is bound at residue Tyr-194. Residue 224-228 (SEARW) coordinates NAD(+). Substrate-binding positions include Arg-229, 241-244 (YPSH), and Tyr-324. An NAD(+)-binding site is contributed by Tyr-241.

Belongs to the Gfo/Idh/MocA family. Glycosyl hydrolase 109 subfamily. Requires NAD(+) as cofactor. Post-translationally, predicted to be exported by the Tat system. The position of the signal peptide cleavage has not been experimentally proven.

In terms of biological role, glycosidase. The chain is Glycosyl hydrolase family 109 protein from Stenotrophomonas maltophilia (strain K279a).